Consider the following 513-residue polypeptide: MSFFPPQQQQTPQPLFQTQQTSLFQPQQTNSIFSQSQPQQTNSIFSQSQPQQTNSIFSQPQQQQQTSLFQPQQFQQQQQQLNQQQQQQVQQQLYLFTNDKAPANYSTKWADLHPDSQKLLLQIEEKILEHRSESQRLDQCSRLYDSSVSSEGFEFDASRIVQELGGINTAMDRQKAVLHELMIVAKDMLRNAEIAVRSFMMLQPRFPHWKQGGGVVSVGSQPSQGQGTNPAPASSGQQQAVTTTVQVSDFYRGIPKKPTAFLLQTVVRFEKYLNECRQWVEELEQLLALDSDKYSRHASLLESLPKVMSNVHDFFVHVAAKVESIHQYIESMRTSYLADQRRRGECHDPFLEADRRETAKQEAAAKRVHPTLHLPASTTSTQPSTQVAGLIASSATPGGSNPPQTSVPTSNPSSGAGFSFLNTPASGPSSSLFATPSSTAPTSSLFGPSPTPTQTPLFGSSPASTFGSTQSLFGQTTPSLTMPSQFGGATPGSGASFGSMTKSSRPKSRTTRR.

Disordered stretches follow at residues 28-62 (QTNS…QPQQ), 217-239 (SVGS…GQQQ), and 356-513 (RETA…TTRR). Residues 30–50 (NSIFSQSQPQQTNSIFSQSQP) are compositionally biased toward polar residues. Composition is skewed to low complexity over residues 51–62 (QQTNSIFSQPQQ) and 217–227 (SVGSQPSQGQG). Residues 356–365 (RETAKQEAAA) show a composition bias toward basic and acidic residues. The segment covering 377–386 (STTSTQPSTQ) has biased composition (low complexity). The segment covering 393–427 (SSATPGGSNPPQTSVPTSNPSSGAGFSFLNTPASG) has biased composition (polar residues). The span at 428–446 (PSSSLFATPSSTAPTSSLF) shows a compositional bias: low complexity. A run of 6 repeats spans residues 446–447 (FG), 458–459 (FG), 466–467 (FG), 473–474 (FG), 486–487 (FG), and 497–498 (FG). The 6 X 2 AA repeats of F-G stretch occupies residues 446–498 (FGPSPTPTQTPLFGSSPASTFGSTQSLFGQTTPSLTMPSQFGGATPGSGASFG). A compositionally biased stretch (polar residues) spans 452–484 (PTQTPLFGSSPASTFGSTQSLFGQTTPSLTMPS). The span at 504-513 (SRPKSRTTRR) shows a compositional bias: basic residues.

This sequence belongs to the NUP58 family. As to quaternary structure, part of the nuclear pore complex (NPC). The NPC has an eight-fold symmetrical structure comprising a central transport channel and two rings, the cytoplasmic and nuclear rings, to which eight filaments are attached. The cytoplasmic filaments have loose ends, while the nuclear filaments are joined in a distal ring, forming a nuclear basket. NPCs are highly dynamic in configuration and composition, and can be devided in 3 subcomplexes, the NUP62 subcomplex, the NUP107-160 subcomplex and the NUP93 subcomplex, containing approximately 30 different nucleoporin proteins. Interacts with GAI, NUP62, SKP1A and SKP1B. Ubiquitous. Higherst expression in cauline leaves, lowest in roots.

It is found in the nucleus envelope. The protein resides in the nucleus. The protein localises to the nuclear pore complex. Its function is as follows. Involved in nucleocytoplasmic trafficking. May have regulatory roles in the gibberellin pathway, in auxin signaling and in light perception. The sequence is that of Nuclear pore complex protein NUP58 from Arabidopsis thaliana (Mouse-ear cress).